The chain runs to 124 residues: Ribonuclease pancreatic (124 aa).

Basic and acidic residues predominate over residues K1–M13. The segment at K1–S23 is disordered. K7 and R10 together coordinate substrate. The Proton acceptor role is filled by H12. 4 disulfides stabilise this stretch: C26/C84, C40/C95, C58/C110, and C65/C72. N-linked (GlcNAc...) asparagine glycosylation occurs at N34. Substrate contacts are provided by residues K41–T45, K66, and R85. H119 acts as the Proton donor in catalysis.

Belongs to the pancreatic ribonuclease family. Monomer. Interacts with and forms tight 1:1 complexes with RNH1. Dimerization of two such complexes may occur. Interaction with RNH1 inhibits this protein. Pancreas.

It localises to the secreted. The catalysed reaction is an [RNA] containing cytidine + H2O = an [RNA]-3'-cytidine-3'-phosphate + a 5'-hydroxy-ribonucleotide-3'-[RNA].. It carries out the reaction an [RNA] containing uridine + H2O = an [RNA]-3'-uridine-3'-phosphate + a 5'-hydroxy-ribonucleotide-3'-[RNA].. Functionally, endonuclease that catalyzes the cleavage of RNA on the 3' side of pyrimidine nucleotides. Acts on single-stranded and double-stranded RNA. The chain is Ribonuclease pancreatic (RNASE1) from Alces alces alces (European moose).